A 542-amino-acid chain; its full sequence is Chitinase 2 (542 aa).

Residues 1 to 22 (MLTRTFLGMAISAFLASTGVQA) form the signal peptide. One can recognise a GH18 domain in the interval 29–314 (PNVMYYWGQN…SQLYSLVHSG (286 aa)). The active-site Proton donor is the Glu-166. The segment at 312–356 (HSGGSTPPPPSSSSATKTTTKTTATSTKTTTTTAPTATSTPGSCP) is disordered. Residues 323 to 354 (SSSATKTTTKTTATSTKTTTTTAPTATSTPGS) are compositionally biased toward low complexity. The segment at 355–406 (CPVANQPCSTQNQYACTADGKYAVCDHGKWVASSCPSNTVCIPTTDGASIYC) is chitin-binding, high affinity. Residues 447-542 (AQLAVTSTDK…APSTSAWNFK (96 aa)) constitute a propeptide that is removed on maturation.

It belongs to the glycosyl hydrolase 18 family. Chitinase class III subfamily. In terms of assembly, monomer. Post-translationally, O-glycosylated.

It localises to the secreted. It catalyses the reaction Random endo-hydrolysis of N-acetyl-beta-D-glucosaminide (1-&gt;4)-beta-linkages in chitin and chitodextrins.. Functionally, probably involved in the apical growth and branching of fungal hyphae. The sequence is that of Chitinase 2 (CHI2) from Rhizopus oligosporus (Rhizopus microsporus var. oligosporus).